Consider the following 185-residue polypeptide: Translocon-associated protein subunit gamma (185 aa).

Methionine 1 carries the N-acetylmethionine modification. Over 1–27 (MAPKGSCKQQSEEDLLLQDFSRNLSAK) the chain is Lumenal. Phosphoserine is present on serine 11. Residues 28–48 (SSALFFGNAFIVSAIPIWLYW) traverse the membrane as a helical segment. Residues 49–54 (RIWHMD) lie on the Cytoplasmic side of the membrane. Residues 55–76 (LIQSAVLYSVMTLVSTYLVAFA) form a helical membrane-spanning segment. Topologically, residues 77–135 (YKNVKFVLKHKVAQKREDAVSKEVTRKLSEADNRKMSRKEKDERILWKKNEVADYEATT) are lumenal. Serine 105 bears the Phosphoserine mark. The chain crosses the membrane as a helical span at residues 136–157 (FSIFYNNTLFLVVVIVASFFIL). The Cytoplasmic portion of the chain corresponds to 158-163 (KNFNPT). Residues 164–184 (VNYILSISASSGLIALLSTGS) traverse the membrane as a helical segment.

The protein belongs to the TRAP-gamma family. As to quaternary structure, heterotetramer of TRAP-alpha, TRAP-beta, TRAP-delta and TRAP-gamma.

The protein resides in the endoplasmic reticulum membrane. TRAP proteins are part of a complex whose function is to bind calcium to the ER membrane and thereby regulate the retention of ER resident proteins. This chain is Translocon-associated protein subunit gamma (SSR3), found in Pongo abelii (Sumatran orangutan).